The following is an 85-amino-acid chain: Small ribosomal subunit protein uS17 (85 aa).

Belongs to the universal ribosomal protein uS17 family. As to quaternary structure, part of the 30S ribosomal subunit.

One of the primary rRNA binding proteins, it binds specifically to the 5'-end of 16S ribosomal RNA. The polypeptide is Small ribosomal subunit protein uS17 (Lachnospira eligens (strain ATCC 27750 / DSM 3376 / VPI C15-48 / C15-B4) (Eubacterium eligens)).